The following is a 337-amino-acid chain: DNA-directed RNA polymerase subunit alpha (337 aa).

Positions 1-233 are alpha N-terminal domain (alpha-NTD); it reads MVREEVVGST…DLFIPFLHAE (233 aa). The alpha C-terminal domain (alpha-CTD) stretch occupies residues 265 to 337; sequence KEIALKCIFI…FAIDLPKNKF (73 aa).

This sequence belongs to the RNA polymerase alpha chain family. In terms of assembly, in plastids the minimal PEP RNA polymerase catalytic core is composed of four subunits: alpha, beta, beta', and beta''. When a (nuclear-encoded) sigma factor is associated with the core the holoenzyme is formed, which can initiate transcription.

The protein resides in the plastid. The protein localises to the chloroplast. It carries out the reaction RNA(n) + a ribonucleoside 5'-triphosphate = RNA(n+1) + diphosphate. DNA-dependent RNA polymerase catalyzes the transcription of DNA into RNA using the four ribonucleoside triphosphates as substrates. The protein is DNA-directed RNA polymerase subunit alpha of Acorus calamus (Sweet flag).